The sequence spans 293 residues: Ribosomal protein L11 methyltransferase (293 aa).

S-adenosyl-L-methionine contacts are provided by threonine 145, glycine 166, aspartate 188, and asparagine 230.

It belongs to the methyltransferase superfamily. PrmA family.

It is found in the cytoplasm. It catalyses the reaction L-lysyl-[protein] + 3 S-adenosyl-L-methionine = N(6),N(6),N(6)-trimethyl-L-lysyl-[protein] + 3 S-adenosyl-L-homocysteine + 3 H(+). In terms of biological role, methylates ribosomal protein L11. The sequence is that of Ribosomal protein L11 methyltransferase from Klebsiella pneumoniae subsp. pneumoniae (strain ATCC 700721 / MGH 78578).